Consider the following 194-residue polypeptide: ATP-dependent Clp protease proteolytic subunit (194 aa).

Catalysis depends on serine 98, which acts as the Nucleophile. Residue histidine 123 is part of the active site.

Belongs to the peptidase S14 family. In terms of assembly, fourteen ClpP subunits assemble into 2 heptameric rings which stack back to back to give a disk-like structure with a central cavity, resembling the structure of eukaryotic proteasomes.

The protein localises to the cytoplasm. It catalyses the reaction Hydrolysis of proteins to small peptides in the presence of ATP and magnesium. alpha-casein is the usual test substrate. In the absence of ATP, only oligopeptides shorter than five residues are hydrolyzed (such as succinyl-Leu-Tyr-|-NHMec, and Leu-Tyr-Leu-|-Tyr-Trp, in which cleavage of the -Tyr-|-Leu- and -Tyr-|-Trp bonds also occurs).. Cleaves peptides in various proteins in a process that requires ATP hydrolysis. Has a chymotrypsin-like activity. Plays a major role in the degradation of misfolded proteins. The polypeptide is ATP-dependent Clp protease proteolytic subunit (Wigglesworthia glossinidia brevipalpis).